The following is a 206-amino-acid chain: Inner membrane-spanning protein YciB (206 aa).

5 consecutive transmembrane segments (helical) span residues 22–42 (IYTA…LTYF), 50–70 (MQVI…FLHD), 76–96 (WKVT…HIMG), 118–138 (INWA…YVAF), and 148–168 (FKVF…GVYI). Basic and acidic residues predominate over residues 178-189 (LPKDKHQQRDQE). Positions 178-206 (LPKDKHQQRDQETQNDTQQELSGKNTEEK) are disordered. A compositionally biased stretch (polar residues) spans 191 to 206 (QNDTQQELSGKNTEEK).

Belongs to the YciB family.

It localises to the cell inner membrane. Plays a role in cell envelope biogenesis, maintenance of cell envelope integrity and membrane homeostasis. This Vibrio atlanticus (strain LGP32) (Vibrio splendidus (strain Mel32)) protein is Inner membrane-spanning protein YciB.